The primary structure comprises 433 residues: Agnestins efflux protein AgnL12 (433 aa).

2 stretches are compositionally biased toward polar residues: residues 1–10 (MSRSTSTELQ) and 25–40 (SIASSETASGSKPPST). A disordered region spans residues 1–40 (MSRSTSTELQQELPASKEVPPDPTSIASSETASGSKPPST). A run of 12 helical transmembrane segments spans residues 47 to 67 (ILVLVGSFLVTFCSVGFTNAF), 87 to 107 (ISWIGSFNIFCMFGCTFISGY), 116 to 136 (LLICFGSLVMVFALFMLSLST), 141 to 161 (IFLTQAFLFGVGISFVLLPAM), 174 to 194 (LAMGIIVSGSSLGGVIWPIAL), 205 to 225 (WTVRIAAFIMLPLLGLACLAI), 248 to 268 (VMIFLAIGLFLIFLGLFSPFF), 285 to 305 (FYMVSVVNASSLFGRILPGLI), 309 to 329 (VGNYNVLFMVAVFSGLVACCW), 335 to 355 (VGGIVVFSLAYGLASGAVISL), 370 to 390 (GVAMGVVMTFLSIAGLVGTPI), and 401 to 421 (LGLSLFSGLVMLLGSVFILLA).

This sequence belongs to the major facilitator superfamily. Monocarboxylate porter (TC 2.A.1.13) family.

Its subcellular location is the cell membrane. Its function is as follows. Efflux pump that may be involved in the secretion of agnestins, dihydroxy-xanthone metabolites. This Paecilomyces divaricatus (Penicillium divaricatum) protein is Agnestins efflux protein AgnL12.